The chain runs to 257 residues: Ribosomal RNA small subunit methyltransferase J (257 aa).

Residues 109-110, 125-126, and Asp-179 each bind S-adenosyl-L-methionine; these read RD and ER.

Belongs to the methyltransferase superfamily. RsmJ family.

The protein localises to the cytoplasm. It carries out the reaction guanosine(1516) in 16S rRNA + S-adenosyl-L-methionine = N(2)-methylguanosine(1516) in 16S rRNA + S-adenosyl-L-homocysteine + H(+). Specifically methylates the guanosine in position 1516 of 16S rRNA. The polypeptide is Ribosomal RNA small subunit methyltransferase J (Actinobacillus succinogenes (strain ATCC 55618 / DSM 22257 / CCUG 43843 / 130Z)).